The following is a 602-amino-acid chain: Aspartate--tRNA(Asp/Asn) ligase (602 aa).

L-aspartate is bound at residue Glu-176. The aspartate stretch occupies residues 200 to 203 (QQFK). Positions 222 and 452 each coordinate L-aspartate. 222 to 224 (RDE) serves as a coordination point for ATP. Residue Glu-490 participates in ATP binding. Arg-497 contributes to the L-aspartate binding site. 542-545 (GIDR) is an ATP binding site.

The protein belongs to the class-II aminoacyl-tRNA synthetase family. Type 1 subfamily. As to quaternary structure, homodimer.

Its subcellular location is the cytoplasm. It catalyses the reaction tRNA(Asx) + L-aspartate + ATP = L-aspartyl-tRNA(Asx) + AMP + diphosphate. In terms of biological role, aspartyl-tRNA synthetase with relaxed tRNA specificity since it is able to aspartylate not only its cognate tRNA(Asp) but also tRNA(Asn). Reaction proceeds in two steps: L-aspartate is first activated by ATP to form Asp-AMP and then transferred to the acceptor end of tRNA(Asp/Asn). This Rickettsia conorii (strain ATCC VR-613 / Malish 7) protein is Aspartate--tRNA(Asp/Asn) ligase.